Consider the following 353-residue polypeptide: Putative actin-28 (353 aa).

This sequence belongs to the actin family.

The protein resides in the cytoplasm. The protein localises to the cytoskeleton. It catalyses the reaction ATP + H2O = ADP + phosphate + H(+). Actins are highly conserved proteins that are involved in various types of cell motility and are ubiquitously expressed in all eukaryotic cells. Multiple isoforms are involved in various cellular functions such as cytoskeleton structure, cell mobility, chromosome movement and muscle contraction. This is Putative actin-28 (act28) from Dictyostelium discoideum (Social amoeba).